We begin with the raw amino-acid sequence, 365 residues long: MDGGTFDIQPIGRFYGSNTTIRRPREITCFSYDAEHKFHLGDSSLRYYYTPRLPADLNRGFDTFQKLDDTADEHLDALLETIMALEKETGKRCEADIITWRGMMTKILTAPFDNLNGFEMNATCFQVGGENNLYKIQQKQIQENQRMPPGMASQDLMAYWGYKFETLCLLQQPWDPTPRAEIESREDLVVNNNAQYCSVVRTGIGSTRLIIGGEVDAVWDCKPDRKEDPINWVELKTSAEIRNDRDMIKYERKLLKFWAQSFLLGVPKIIVGFRDNHGIVHRLEELETASIPNKVKKLGRGTWDGNICINFAAAFLEWLKSTIKEGGTWRIRKLEKSSLIQVFKIEETGTGDIISRSFLDWRSRS.

Residue Glu-165 participates in a divalent metal cation binding. Substrate contacts are provided by Cys-197 and Glu-214. Residues Asp-216, Glu-234, and Leu-235 each coordinate a divalent metal cation. 2 residues coordinate substrate: Lys-236 and Gln-260.

This sequence belongs to the DXO/Dom3Z family. In terms of assembly, interacts with rat1; the interaction is direct, stabilizes rat1 protein structure and stimulates its exoribonuclease activity. The interaction also stimulates rai1 pyrophosphohydrolase activity, probably by recruiting it to mRNA substrates. A divalent metal cation is required as a cofactor.

It localises to the nucleus. It carries out the reaction a 5'-end NAD(+)-phospho-ribonucleoside in mRNA + H2O = a 5'-end phospho-ribonucleoside in mRNA + NAD(+) + H(+). It catalyses the reaction a 5'-end (N(7)-methyl 5'-triphosphoguanosine)-ribonucleoside-ribonucleotide in mRNA + H2O = a (N(7)-methyl 5'-triphosphoguanosine)-nucleoside + a 5'-end phospho-ribonucleoside in mRNA + H(+). The catalysed reaction is a 5'-end triphospho-ribonucleoside in mRNA + H2O = a 5'-end phospho-ribonucleoside in mRNA + diphosphate + H(+). In terms of biological role, decapping enzyme for NAD-capped RNAs: specifically hydrolyzes the nicotinamide adenine dinucleotide (NAD) cap from a subset of RNAs by removing the entire NAD moiety from the 5'-end of an NAD-capped RNA. The NAD-cap is present at the 5'-end of some RNAs and snoRNAs. In contrast to the canonical 5'-end N7 methylguanosine (m7G) cap, the NAD cap promotes mRNA decay. Also acts as a non-canonical decapping enzyme that removes the entire cap structure of m7G capped or incompletely capped RNAs. Has decapping activity toward incomplete 5'-end m7G cap mRNAs such as unmethylated 5'-end-capped RNA (cap0), while it has no activity toward 2'-O-ribose methylated m7G cap (cap1). Also possesses RNA 5'-pyrophosphohydrolase activity by hydrolyzing the 5'-end triphosphate to release pyrophosphates. Stimulates exoribonuclease activity of Rat1, allowing it to degrade RNAs with stable secondary structure more effectively. This Aspergillus fumigatus (strain ATCC MYA-4609 / CBS 101355 / FGSC A1100 / Af293) (Neosartorya fumigata) protein is Decapping nuclease RAI1 (rai1).